A 186-amino-acid polypeptide reads, in one-letter code: Probable chorismate pyruvate-lyase (186 aa).

Positions 80, 118, and 170 each coordinate substrate.

This sequence belongs to the UbiC family.

It is found in the cytoplasm. It carries out the reaction chorismate = 4-hydroxybenzoate + pyruvate. The protein operates within cofactor biosynthesis; ubiquinone biosynthesis. Functionally, removes the pyruvyl group from chorismate, with concomitant aromatization of the ring, to provide 4-hydroxybenzoate (4HB) for the ubiquinone pathway. The chain is Probable chorismate pyruvate-lyase from Pseudomonas savastanoi pv. phaseolicola (strain 1448A / Race 6) (Pseudomonas syringae pv. phaseolicola (strain 1448A / Race 6)).